Reading from the N-terminus, the 120-residue chain is Chaperonin GroEL (120 aa).

23–27 lines the ATP pocket; the sequence is DGTTT.

The protein belongs to the chaperonin (HSP60) family. As to quaternary structure, forms a cylinder of 14 subunits composed of two heptameric rings stacked back-to-back. Interacts with the co-chaperonin GroES.

The protein localises to the cytoplasm. The catalysed reaction is ATP + H2O + a folded polypeptide = ADP + phosphate + an unfolded polypeptide.. In terms of biological role, together with its co-chaperonin GroES, plays an essential role in assisting protein folding. The GroEL-GroES system forms a nano-cage that allows encapsulation of the non-native substrate proteins and provides a physical environment optimized to promote and accelerate protein folding. The protein is Chaperonin GroEL of Mycolicibacterium pulveris (Mycobacterium pulveris).